A 363-amino-acid chain; its full sequence is Probable methyltransferase-like protein 24 (363 aa).

The signal sequence occupies residues 1–38 (MGTAKPPGRGCGALPRWLLGAALLLGLRLCMELRHAGS). Residues 37 to 62 (GSGPPGRRDLRGPPRTHLLPAPGPLR) form a disordered region.

This sequence belongs to the methyltransferase superfamily.

The protein resides in the secreted. Functionally, probable methyltransferase. This chain is Probable methyltransferase-like protein 24 (Mettl24), found in Rattus norvegicus (Rat).